Consider the following 78-residue polypeptide: Acyl carrier protein (78 aa).

One can recognise a Carrier domain in the interval 1–76 (MALFEDIQAV…DVVKYIEDNK (76 aa)). O-(pantetheine 4'-phosphoryl)serine is present on Ser36.

The protein belongs to the acyl carrier protein (ACP) family. 4'-phosphopantetheine is transferred from CoA to a specific serine of apo-ACP by AcpS. This modification is essential for activity because fatty acids are bound in thioester linkage to the sulfhydryl of the prosthetic group.

The protein resides in the cytoplasm. Its pathway is lipid metabolism; fatty acid biosynthesis. Functionally, carrier of the growing fatty acid chain in fatty acid biosynthesis. The polypeptide is Acyl carrier protein (Helicobacter pylori (strain J99 / ATCC 700824) (Campylobacter pylori J99)).